A 23-amino-acid polypeptide reads, in one-letter code: uncharacterized protein (23 aa).

The protein localises to the plastid. Its subcellular location is the chloroplast. This is an uncharacterized protein from Zea mays (Maize).